The sequence spans 742 residues: Zinc finger protein 700 (742 aa).

Residues 1-20 (MPCCSHRSCREDPGTSESRE) form a disordered region. Residues 8-20 (SCREDPGTSESRE) are compositionally biased toward basic and acidic residues. The region spanning 24-104 (VAFEDVAVNF…KEDSHCGETF (81 aa)) is the KRAB domain. C2H2-type zinc fingers lie at residues 194-216 (YACK…MVMH), 222-244 (YKCK…ERTH), 250-272 (YECK…ERTH), 278-300 (YECS…ERSH), 306-328 (YQCK…ERTH), 362-384 (YKCK…EKTH), 390-412 (YKCK…ERIH), 418-440 (YECK…GGTH), and 446-468 (YECK…GRTH). The segment at 474–502 (YECKECGKAFRYVKHLQIHERTEKHIRMP) adopts a C2H2-type 10; degenerate zinc-finger fold. C2H2-type zinc fingers lie at residues 508-530 (YKCS…EKTH), 536-558 (YECN…ERTH), 564-586 (YECK…ERTH), 592-614 (YECK…GRTH), 620-642 (YECK…ERTH), 648-670 (YECK…ERKH), 676-698 (YECK…ARTH), and 704-726 (YECK…ARTH).

Belongs to the krueppel C2H2-type zinc-finger protein family.

The protein resides in the nucleus. Functionally, may be involved in transcriptional regulation. In Homo sapiens (Human), this protein is Zinc finger protein 700 (ZNF700).